The following is a 273-amino-acid chain: Dermonecrotic toxin LapSicTox-alphaIB1aiii (273 aa).

His5 is an active-site residue. 2 residues coordinate Mg(2+): Glu25 and Asp27. Catalysis depends on His41, which acts as the Nucleophile. 2 disulfides stabilise this stretch: Cys45/Cys51 and Cys47/Cys190. A Mg(2+)-binding site is contributed by Asp85. Asn250 is a glycosylation site (N-linked (GlcNAc...) asparagine).

The protein belongs to the arthropod phospholipase D family. Class II subfamily. The cofactor is Mg(2+). In terms of tissue distribution, expressed by the venom gland.

It localises to the secreted. The enzyme catalyses an N-(acyl)-sphingosylphosphocholine = an N-(acyl)-sphingosyl-1,3-cyclic phosphate + choline. It catalyses the reaction an N-(acyl)-sphingosylphosphoethanolamine = an N-(acyl)-sphingosyl-1,3-cyclic phosphate + ethanolamine. The catalysed reaction is a 1-acyl-sn-glycero-3-phosphocholine = a 1-acyl-sn-glycero-2,3-cyclic phosphate + choline. It carries out the reaction a 1-acyl-sn-glycero-3-phosphoethanolamine = a 1-acyl-sn-glycero-2,3-cyclic phosphate + ethanolamine. In terms of biological role, dermonecrotic toxins cleave the phosphodiester linkage between the phosphate and headgroup of certain phospholipids (sphingolipid and lysolipid substrates), forming an alcohol (often choline) and a cyclic phosphate. This toxin acts on sphingomyelin (SM). It may also act on ceramide phosphoethanolamine (CPE), lysophosphatidylcholine (LPC) and lysophosphatidylethanolamine (LPE), but not on lysophosphatidylserine (LPS), and lysophosphatidylglycerol (LPG). It acts by transphosphatidylation, releasing exclusively cyclic phosphate products as second products. Induces dermonecrosis, hemolysis, increased vascular permeability, edema, inflammatory response, and platelet aggregation. This Loxosceles apachea (Apache recluse spider) protein is Dermonecrotic toxin LapSicTox-alphaIB1aiii.